Here is a 169-residue protein sequence, read N- to C-terminus: Capsid protein (169 aa).

It belongs to the nanoviridae capsid protein family.

The protein localises to the virion. The sequence is that of Capsid protein (DNA-S) from Subterranean clover stunt virus (strain F) (SCSV).